The following is a 118-amino-acid chain: Basic phospholipase A2 CM-II (118 aa).

7 disulfide bridges follow: cysteine 11–cysteine 70, cysteine 26–cysteine 117, cysteine 28–cysteine 44, cysteine 43–cysteine 98, cysteine 50–cysteine 91, cysteine 59–cysteine 84, and cysteine 77–cysteine 89. Ca(2+)-binding residues include tyrosine 27, glycine 29, and glycine 31. Histidine 47 is a catalytic residue. Position 48 (aspartate 48) interacts with Ca(2+). Aspartate 92 is a catalytic residue.

It belongs to the phospholipase A2 family. Group I subfamily. D49 sub-subfamily. Requires Ca(2+) as cofactor. In terms of tissue distribution, expressed by the venom gland.

The protein localises to the secreted. The catalysed reaction is a 1,2-diacyl-sn-glycero-3-phosphocholine + H2O = a 1-acyl-sn-glycero-3-phosphocholine + a fatty acid + H(+). In terms of biological role, snake venom phospholipase A2 (PLA2) that causes myonecrosis when injected intramuscularly, causes neuromuscular blockade with a gradual contracture and a decreased sensitivity to ACh and KCl (in the chick biventer cervicis nerve-muscle preparation), abolishes twitches evoked by indirect stimulation earlier than those by direct stimulation (in the mouse phrenic nerve-diaphragm preparation), shows indirect hemolytic activity, and shows weak anticoagulant activity. PLA2 catalyzes the calcium-dependent hydrolysis of the 2-acyl groups in 3-sn-phosphoglycerides. The sequence is that of Basic phospholipase A2 CM-II from Naja mossambica (Mozambique spitting cobra).